The sequence spans 174 residues: ATP-dependent protease subunit HslV (174 aa).

Thr-2 is an active-site residue. Na(+)-binding residues include Gly-157, Cys-160, and Thr-163.

Belongs to the peptidase T1B family. HslV subfamily. As to quaternary structure, a double ring-shaped homohexamer of HslV is capped on each side by a ring-shaped HslU homohexamer. The assembly of the HslU/HslV complex is dependent on binding of ATP.

It localises to the cytoplasm. The catalysed reaction is ATP-dependent cleavage of peptide bonds with broad specificity.. Allosterically activated by HslU binding. Protease subunit of a proteasome-like degradation complex believed to be a general protein degrading machinery. The protein is ATP-dependent protease subunit HslV of Shewanella loihica (strain ATCC BAA-1088 / PV-4).